Reading from the N-terminus, the 95-residue chain is Small ribosomal subunit protein bS6 (95 aa).

The protein belongs to the bacterial ribosomal protein bS6 family.

In terms of biological role, binds together with bS18 to 16S ribosomal RNA. The sequence is that of Small ribosomal subunit protein bS6 from Desulforamulus reducens (strain ATCC BAA-1160 / DSM 100696 / MI-1) (Desulfotomaculum reducens).